Consider the following 464-residue polypeptide: Eukaryotic translation initiation factor 5 (464 aa).

Residue S9 is modified to Phosphoserine. 28–35 (GKGNGIKT) is a binding site for GTP. 2 disordered regions span residues 145–203 (NPPS…ASQT) and 409–464 (EEES…IDDI). Positions 174–184 (ADGSMTNNSLA) are enriched in polar residues. The W2 domain maps to 254–415 (DKTEKERIDI…KNAEEESSES (162 aa)). 2 stretches are compositionally biased toward acidic residues: residues 410–427 (EESS…EEDN) and 451–464 (GDED…IDDI). A phosphoserine mark is found at S412, S413, and S415.

It belongs to the eIF-2-beta/eIF-5 family.

Its function is as follows. Catalyzes the hydrolysis of GTP bound to the 40S ribosomal initiation complex (40S.mRNA.Met-tRNA[F].eIF-2.GTP) with the subsequent joining of a 60S ribosomal subunit resulting in the release of eIF-2 and the guanine nucleotide. The subsequent joining of a 60S ribosomal subunit results in the formation of a functional 80S initiation complex (80S.mRNA.Met-tRNA[F]). In Drosophila melanogaster (Fruit fly), this protein is Eukaryotic translation initiation factor 5 (eIF5).